Here is a 192-residue protein sequence, read N- to C-terminus: Interferon epsilon (192 aa).

The first 21 residues, 1 to 21 (MVHRQLPETVLLLLVSSTIFS), serve as a signal peptide directing secretion. Cysteine 52 and cysteine 162 form a disulfide bridge.

Belongs to the alpha/beta interferon family. Expressed at very high levels in uterus and, at much lower levels, in ovary and cervix. Very low levels, if any, in other organs. In the endometrium, expressed in the luminal and glandular epithelial cells (at protein level).

It localises to the secreted. Functionally, type I interferon required for maintaining basal levels of IFN-regulated genes, including 2'-5'-oligoadenylate synthetase, IRF7 and ISG15, in the female reproductive tract. Directly mediates protection against viral, including HSV-2, and bacterial, including Chlamydia muridarum, genital infections. The protein is Interferon epsilon (Ifne) of Mus musculus (Mouse).